Reading from the N-terminus, the 285-residue chain is Pantothenate synthetase (285 aa).

30–37 (MGYLHEGH) lines the ATP pocket. The active-site Proton donor is His37. A (R)-pantoate-binding site is contributed by Gln61. Beta-alanine is bound at residue Gln61. Residue 148 to 151 (GKKD) participates in ATP binding. Gln154 is a binding site for (R)-pantoate. ATP contacts are provided by residues Ile177 and 185–188 (LSSR).

It belongs to the pantothenate synthetase family. In terms of assembly, homodimer.

The protein localises to the cytoplasm. The enzyme catalyses (R)-pantoate + beta-alanine + ATP = (R)-pantothenate + AMP + diphosphate + H(+). The protein operates within cofactor biosynthesis; (R)-pantothenate biosynthesis; (R)-pantothenate from (R)-pantoate and beta-alanine: step 1/1. Its function is as follows. Catalyzes the condensation of pantoate with beta-alanine in an ATP-dependent reaction via a pantoyl-adenylate intermediate. The protein is Pantothenate synthetase of Leptospira borgpetersenii serovar Hardjo-bovis (strain JB197).